A 297-amino-acid polypeptide reads, in one-letter code: N-acetylmuramic acid 6-phosphate etherase (297 aa).

The region spanning 55-218 (AAAALTRGGR…STGAMVKCGK (164 aa)) is the SIS domain. Glu83 functions as the Proton donor in the catalytic mechanism. Glu114 is an active-site residue.

The protein belongs to the GCKR-like family. MurNAc-6-P etherase subfamily. In terms of assembly, homodimer.

It catalyses the reaction N-acetyl-D-muramate 6-phosphate + H2O = N-acetyl-D-glucosamine 6-phosphate + (R)-lactate. Its pathway is amino-sugar metabolism; 1,6-anhydro-N-acetylmuramate degradation. The protein operates within amino-sugar metabolism; N-acetylmuramate degradation. It functions in the pathway cell wall biogenesis; peptidoglycan recycling. In terms of biological role, specifically catalyzes the cleavage of the D-lactyl ether substituent of MurNAc 6-phosphate, producing GlcNAc 6-phosphate and D-lactate. Together with AnmK, is also required for the utilization of anhydro-N-acetylmuramic acid (anhMurNAc) either imported from the medium or derived from its own cell wall murein, and thus plays a role in cell wall recycling. The chain is N-acetylmuramic acid 6-phosphate etherase from Cronobacter sakazakii (strain ATCC BAA-894) (Enterobacter sakazakii).